The sequence spans 270 residues: MSAPIFDPTPEDIQNLLAAQTHIGSKNVQVQNIPYVFKQRADGVNIINVGKTWEKIQLAARIIAAVPNPADVVAISARTYGQRAVLKFANHCGATAIAGRFTPGSFTNYITRSFKEPRLLIVTDPRTDHQAIKEASYVNIPVIALVDTDSPVEFVDVAIPCNNKGRHSVGLVWWMISREVLRLRGALEDRNTEWSVMPDLYFYRDPEEPENTEEAAEEAATEEVVETAAAEAAAATNADNWDVAPDAGAGAADWAATDDWSESAPAPVAA.

Residues 207–225 (EEPENTEEAAEEAATEEVV) are compositionally biased toward acidic residues. Residues 207–270 (EEPENTEEAA…SESAPAPVAA (64 aa)) are disordered. The span at 226 to 258 (ETAAAEAAAATNADNWDVAPDAGAGAADWAATD) shows a compositional bias: low complexity.

It belongs to the universal ribosomal protein uS2 family. In terms of assembly, component of the small ribosomal subunit. Mature ribosomes consist of a small (40S) and a large (60S) subunit. The 40S subunit contains about 33 different proteins and 1 molecule of RNA (18S). The 60S subunit contains about 49 different proteins and 3 molecules of RNA (25S, 5.8S and 5S). Interacts with RPS21.

It is found in the cytoplasm. In terms of biological role, required for the assembly and/or stability of the 40S ribosomal subunit. Required for the processing of the 20S rRNA-precursor to mature 18S rRNA in a late step of the maturation of 40S ribosomal subunits. The sequence is that of Small ribosomal subunit protein uS2 from Yarrowia lipolytica (strain CLIB 122 / E 150) (Yeast).